Here is a 123-residue protein sequence, read N- to C-terminus: Alpha-lactalbumin (123 aa).

Positions 1–123 (KQFTKCELSQ…KLEQWLCEKE (123 aa)) constitute a C-type lysozyme domain. 4 cysteine pairs are disulfide-bonded: cysteine 6/cysteine 120, cysteine 28/cysteine 111, cysteine 61/cysteine 77, and cysteine 73/cysteine 91. Asparagine 45 carries N-linked (GlcNAc...) asparagine glycosylation. The Ca(2+) site is built by lysine 79, aspartate 82, aspartate 84, aspartate 87, and aspartate 88.

It belongs to the glycosyl hydrolase 22 family. As to quaternary structure, lactose synthase (LS) is a heterodimer of a catalytic component, beta1,4-galactosyltransferase (beta4Gal-T1) and a regulatory component, alpha-lactalbumin (LA). As to expression, mammary gland specific. Secreted in milk.

The protein resides in the secreted. In terms of biological role, regulatory subunit of lactose synthase, changes the substrate specificity of galactosyltransferase in the mammary gland making glucose a good acceptor substrate for this enzyme. This enables LS to synthesize lactose, the major carbohydrate component of milk. In other tissues, galactosyltransferase transfers galactose onto the N-acetylglucosamine of the oligosaccharide chains in glycoproteins. This Papio cynocephalus (Yellow baboon) protein is Alpha-lactalbumin (LALBA).